Here is a 100-residue protein sequence, read N- to C-terminus: NADH-quinone oxidoreductase subunit K (100 aa).

3 helical membrane passes run 4–24 (LSWYLLLSATLFSIGLIGFVI), 29–49 (IVMLMCLEIMFNAVNIAFASF), and 60–80 (IFVLFSIAVAACEAVIGLAIV).

The protein belongs to the complex I subunit 4L family. In terms of assembly, NDH-1 is composed of 14 different subunits. Subunits NuoA, H, J, K, L, M, N constitute the membrane sector of the complex.

It is found in the cell inner membrane. The catalysed reaction is a quinone + NADH + 5 H(+)(in) = a quinol + NAD(+) + 4 H(+)(out). Its function is as follows. NDH-1 shuttles electrons from NADH, via FMN and iron-sulfur (Fe-S) centers, to quinones in the respiratory chain. The immediate electron acceptor for the enzyme in this species is believed to be ubiquinone. Couples the redox reaction to proton translocation (for every two electrons transferred, four hydrogen ions are translocated across the cytoplasmic membrane), and thus conserves the redox energy in a proton gradient. The sequence is that of NADH-quinone oxidoreductase subunit K from Thermodesulfovibrio yellowstonii (strain ATCC 51303 / DSM 11347 / YP87).